The primary structure comprises 102 residues: Large ribosomal subunit protein uL24 (102 aa).

Belongs to the universal ribosomal protein uL24 family. As to quaternary structure, part of the 50S ribosomal subunit.

In terms of biological role, one of two assembly initiator proteins, it binds directly to the 5'-end of the 23S rRNA, where it nucleates assembly of the 50S subunit. One of the proteins that surrounds the polypeptide exit tunnel on the outside of the subunit. In Limosilactobacillus fermentum (strain NBRC 3956 / LMG 18251) (Lactobacillus fermentum), this protein is Large ribosomal subunit protein uL24.